Reading from the N-terminus, the 390-residue chain is Heparan sulfate glucosamine 3-O-sulfotransferase 3B1 (390 aa).

The segment at 1–25 is disordered; it reads MGQRLSGGRSCLDVPGRFLPQPPPP. At 1-32 the chain is on the cytoplasmic side; it reads MGQRLSGGRSCLDVPGRFLPQPPPPPPPVRRK. A helical; Signal-anchor for type II membrane protein membrane pass occupies residues 33–53; sequence LALLFAMLCIWLYMFLYSCAG. Residues 54 to 390 are Lumenal-facing; that stretch reads SCTAAPGLLL…QMTGRDFGWD (337 aa). Residues 79 to 125 are disordered; sequence TAPNETSPKMPFRAPPANSLAAGKDKTVGAGSQEEQSPEAPDSPSPI. N82 carries N-linked (GlcNAc...) asparagine glycosylation. A 3'-phosphoadenylyl sulfate-binding site is contributed by 147-151; sequence KGGTR. Residues 169–175 and 200–203 contribute to the substrate site; these read EPHFFDR and KTPS. 3'-phosphoadenylyl sulfate contacts are provided by R228 and S236. Residue N258 is glycosylated (N-linked (GlcNAc...) asparagine). 268–269 provides a ligand contact to substrate; sequence WS. An N-linked (GlcNAc...) asparagine glycan is attached at N329. A disulfide bridge links C336 with C348. 3'-phosphoadenylyl sulfate is bound at residue 353–357; it reads KGRAH.

Belongs to the sulfotransferase 1 family.

Its subcellular location is the golgi apparatus membrane. The catalysed reaction is alpha-D-glucosaminyl-[heparan sulfate](n) + 3'-phosphoadenylyl sulfate = 3-sulfo-alpha-D-glucosaminyl-[heparan sulfate](n) + adenosine 3',5'-bisphosphate + H(+). In terms of biological role, sulfotransferase that utilizes 3'-phospho-5'-adenylyl sulfate (PAPS) to catalyze the transfer of a sulfo group to an N-unsubstituted glucosamine linked to a 2-O-sulfo iduronic acid unit on heparan sulfate. Catalyzes the O-sulfation of glucosamine in IdoUA2S-GlcNS and also in IdoUA2S-GlcNH2. Unlike HS3ST1/3-OST-1, does not convert non-anticoagulant heparan sulfate to anticoagulant heparan sulfate. The polypeptide is Heparan sulfate glucosamine 3-O-sulfotransferase 3B1 (Hs3st3b1) (Mus musculus (Mouse)).